Reading from the N-terminus, the 359-residue chain is Aflatoxin B1 aldehyde reductase member 2 (359 aa).

Residues 1–38 constitute a mitochondrion transit peptide; it reads MLSAASRVVSRAAVHCALRSPPPEARALAMSRPPPPRV. Serine 40 is modified (phosphoserine). Position 72 (aspartate 72) interacts with NADP(+). Tyrosine 77 (proton donor) is an active-site residue. Lysine 128 carries the N6-acetyllysine modification. Residue histidine 141 participates in substrate binding. Residues 171–172, glutamine 197, 226–236, and arginine 250 each bind NADP(+); these read SN and NPLAGGLLTGK. Lysine 236 carries the post-translational modification N6-succinyllysine. Serine 255 bears the Phosphoserine mark. Tyrosine 260 and arginine 263 together coordinate substrate. An NADP(+)-binding site is contributed by 318–326; sequence SSLEQLEQN. Position 359 (arginine 359) interacts with substrate.

It belongs to the aldo/keto reductase family. Aldo/keto reductase 2 subfamily. As to quaternary structure, homodimer. In terms of tissue distribution, detected in brain, liver, small intestine and testis, and at lower levels in heart, prostate, skeletal muscle and spleen. Detected in kidney proximal and distal tubules, endothelial cells lining the Bowman's capsules and some cysts. Detected at low levels in lung and pancreas (at protein level). Widely expressed.

It localises to the mitochondrion. Its subcellular location is the golgi apparatus. The protein resides in the cytoplasm. It carries out the reaction 4-hydroxybutanoate + NADP(+) = succinate semialdehyde + NADPH + H(+). Functionally, catalyzes the NADPH-dependent reduction of succinic semialdehyde to gamma-hydroxybutyrate. May have an important role in producing the neuromodulator gamma-hydroxybutyrate (GHB). Has broad substrate specificity. Has NADPH-dependent aldehyde reductase activity towards 2-carboxybenzaldehyde, 2-nitrobenzaldehyde and pyridine-2-aldehyde (in vitro). Can reduce 1,2-naphthoquinone and 9,10-phenanthrenequinone (in vitro). Can reduce the dialdehyde protein-binding form of aflatoxin B1 (AFB1) to the non-binding AFB1 dialcohol. May be involved in protection of liver against the toxic and carcinogenic effects of AFB1, a potent hepatocarcinogen. The sequence is that of Aflatoxin B1 aldehyde reductase member 2 (AKR7A2) from Homo sapiens (Human).